The sequence spans 166 residues: Transcription antitermination protein NusB (166 aa).

Basic and acidic residues predominate over residues 1-18 (MISDESDRFNPRDPKPAD). The interval 1-28 (MISDESDRFNPRDPKPADAGKPSKSAKR) is disordered.

The protein belongs to the NusB family.

In terms of biological role, involved in transcription antitermination. Required for transcription of ribosomal RNA (rRNA) genes. Binds specifically to the boxA antiterminator sequence of the ribosomal RNA (rrn) operons. This is Transcription antitermination protein NusB from Pseudomonas putida (strain GB-1).